The chain runs to 395 residues: Ribosomal RNA small subunit methyltransferase H (395 aa).

S-adenosyl-L-methionine-binding positions include Gly-101 to His-103, Asp-120, Tyr-147, Asp-171, and Gln-178.

Belongs to the methyltransferase superfamily. RsmH family.

The protein resides in the cytoplasm. It catalyses the reaction cytidine(1402) in 16S rRNA + S-adenosyl-L-methionine = N(4)-methylcytidine(1402) in 16S rRNA + S-adenosyl-L-homocysteine + H(+). Its function is as follows. Specifically methylates the N4 position of cytidine in position 1402 (C1402) of 16S rRNA. The chain is Ribosomal RNA small subunit methyltransferase H from Mycobacterium ulcerans (strain Agy99).